Here is a 276-residue protein sequence, read N- to C-terminus: Undecaprenyl-diphosphatase (276 aa).

8 helical membrane-spanning segments follow: residues 1-21 (MSWL…FLPV), 39-59 (AGAS…LVYF), 84-104 (YRLG…GLLL), 115-135 (LWAI…AEYF), 159-179 (LALL…LFLG), 190-210 (FLLA…DAFA), 222-242 (QLLV…AWFL), and 253-273 (FVGY…TGVV).

It belongs to the UppP family.

It localises to the cell membrane. The catalysed reaction is di-trans,octa-cis-undecaprenyl diphosphate + H2O = di-trans,octa-cis-undecaprenyl phosphate + phosphate + H(+). Catalyzes the dephosphorylation of undecaprenyl diphosphate (UPP). Confers resistance to bacitracin. The sequence is that of Undecaprenyl-diphosphatase from Mycobacterium sp. (strain KMS).